A 256-amino-acid polypeptide reads, in one-letter code: Proteasome subunit alpha (256 aa).

Positions 235–256 (ELDSNGSDGNGDAPELNGGSSD) are disordered.

This sequence belongs to the peptidase T1A family. As to quaternary structure, the 20S proteasome core is composed of 14 alpha and 14 beta subunits that assemble into four stacked heptameric rings, resulting in a barrel-shaped structure. The two inner rings, each composed of seven catalytic beta subunits, are sandwiched by two outer rings, each composed of seven alpha subunits. The catalytic chamber with the active sites is on the inside of the barrel. Has a gated structure, the ends of the cylinder being occluded by the N-termini of the alpha-subunits. Is capped by the proteasome-associated ATPase, ARC.

The protein resides in the cytoplasm. It functions in the pathway protein degradation; proteasomal Pup-dependent pathway. Its activity is regulated as follows. The formation of the proteasomal ATPase ARC-20S proteasome complex, likely via the docking of the C-termini of ARC into the intersubunit pockets in the alpha-rings, may trigger opening of the gate for substrate entry. Interconversion between the open-gate and close-gate conformations leads to a dynamic regulation of the 20S proteasome proteolysis activity. In terms of biological role, component of the proteasome core, a large protease complex with broad specificity involved in protein degradation. This is Proteasome subunit alpha from Mycolicibacterium paratuberculosis (strain ATCC BAA-968 / K-10) (Mycobacterium paratuberculosis).